The sequence spans 274 residues: 4-hydroxy-3-methylbut-2-enyl diphosphate reductase (274 aa).

A [4Fe-4S] cluster-binding site is contributed by Cys-12. Residues His-36 and His-70 each contribute to the (2E)-4-hydroxy-3-methylbut-2-enyl diphosphate site. His-36 and His-70 together coordinate dimethylallyl diphosphate. Positions 36 and 70 each coordinate isopentenyl diphosphate. Cys-92 contributes to the [4Fe-4S] cluster binding site. His-120 is a (2E)-4-hydroxy-3-methylbut-2-enyl diphosphate binding site. His-120 contributes to the dimethylallyl diphosphate binding site. His-120 lines the isopentenyl diphosphate pocket. Glu-122 acts as the Proton donor in catalysis. Thr-158 contributes to the (2E)-4-hydroxy-3-methylbut-2-enyl diphosphate binding site. [4Fe-4S] cluster is bound at residue Cys-186. (2E)-4-hydroxy-3-methylbut-2-enyl diphosphate contacts are provided by Ser-214, Ser-215, Asn-216, and Ser-258. Residues Ser-214, Ser-215, Asn-216, and Ser-258 each coordinate dimethylallyl diphosphate. The isopentenyl diphosphate site is built by Ser-214, Ser-215, Asn-216, and Ser-258.

Belongs to the IspH family. [4Fe-4S] cluster serves as cofactor.

The enzyme catalyses isopentenyl diphosphate + 2 oxidized [2Fe-2S]-[ferredoxin] + H2O = (2E)-4-hydroxy-3-methylbut-2-enyl diphosphate + 2 reduced [2Fe-2S]-[ferredoxin] + 2 H(+). It catalyses the reaction dimethylallyl diphosphate + 2 oxidized [2Fe-2S]-[ferredoxin] + H2O = (2E)-4-hydroxy-3-methylbut-2-enyl diphosphate + 2 reduced [2Fe-2S]-[ferredoxin] + 2 H(+). The protein operates within isoprenoid biosynthesis; dimethylallyl diphosphate biosynthesis; dimethylallyl diphosphate from (2E)-4-hydroxy-3-methylbutenyl diphosphate: step 1/1. Its pathway is isoprenoid biosynthesis; isopentenyl diphosphate biosynthesis via DXP pathway; isopentenyl diphosphate from 1-deoxy-D-xylulose 5-phosphate: step 6/6. Functionally, catalyzes the conversion of 1-hydroxy-2-methyl-2-(E)-butenyl 4-diphosphate (HMBPP) into a mixture of isopentenyl diphosphate (IPP) and dimethylallyl diphosphate (DMAPP). Acts in the terminal step of the DOXP/MEP pathway for isoprenoid precursor biosynthesis. This is 4-hydroxy-3-methylbut-2-enyl diphosphate reductase from Campylobacter concisus (strain 13826).